The sequence spans 340 residues: Glycerol-3-phosphate dehydrogenase [NAD(P)+] (340 aa).

Residues Ser14, Phe15, Arg35, and Lys108 each contribute to the NADPH site. The sn-glycerol 3-phosphate site is built by Lys108 and Gly136. Ala140 provides a ligand contact to NADPH. Sn-glycerol 3-phosphate is bound by residues Lys191, Asp244, Ser254, Arg255, and Asn256. Catalysis depends on Lys191, which acts as the Proton acceptor. Position 255 (Arg255) interacts with NADPH. Glu281 lines the NADPH pocket.

Belongs to the NAD-dependent glycerol-3-phosphate dehydrogenase family.

Its subcellular location is the cytoplasm. It catalyses the reaction sn-glycerol 3-phosphate + NAD(+) = dihydroxyacetone phosphate + NADH + H(+). The enzyme catalyses sn-glycerol 3-phosphate + NADP(+) = dihydroxyacetone phosphate + NADPH + H(+). It functions in the pathway membrane lipid metabolism; glycerophospholipid metabolism. Its function is as follows. Catalyzes the reduction of the glycolytic intermediate dihydroxyacetone phosphate (DHAP) to sn-glycerol 3-phosphate (G3P), the key precursor for phospholipid synthesis. This Pseudomonas paraeruginosa (strain DSM 24068 / PA7) (Pseudomonas aeruginosa (strain PA7)) protein is Glycerol-3-phosphate dehydrogenase [NAD(P)+].